The following is a 396-amino-acid chain: Phosphoglycerate kinase (396 aa).

Substrate-binding positions include 20–22, R35, 58–61, R115, and R155; these read DIN and HQGR. Residues E328 and 353 to 356 each bind ATP; that span reads GGDT.

Belongs to the phosphoglycerate kinase family. Monomer.

The protein localises to the cytoplasm. The enzyme catalyses (2R)-3-phosphoglycerate + ATP = (2R)-3-phospho-glyceroyl phosphate + ADP. It functions in the pathway carbohydrate degradation; glycolysis; pyruvate from D-glyceraldehyde 3-phosphate: step 2/5. The protein is Phosphoglycerate kinase of Natronomonas pharaonis (strain ATCC 35678 / DSM 2160 / CIP 103997 / JCM 8858 / NBRC 14720 / NCIMB 2260 / Gabara) (Halobacterium pharaonis).